The sequence spans 222 residues: Putative N-acetylmannosamine-6-phosphate 2-epimerase (222 aa).

It belongs to the NanE family.

It carries out the reaction an N-acyl-D-glucosamine 6-phosphate = an N-acyl-D-mannosamine 6-phosphate. It functions in the pathway amino-sugar metabolism; N-acetylneuraminate degradation; D-fructose 6-phosphate from N-acetylneuraminate: step 3/5. In terms of biological role, converts N-acetylmannosamine-6-phosphate (ManNAc-6-P) to N-acetylglucosamine-6-phosphate (GlcNAc-6-P). In Staphylococcus aureus (strain Mu3 / ATCC 700698), this protein is Putative N-acetylmannosamine-6-phosphate 2-epimerase.